A 355-amino-acid chain; its full sequence is MTELKNDRYLRALLKEPVDCTPVWMMRQAGRYLPEYKATRAQAGDFMSLCKNAELASEVTLQPLRRFPLDAAILFSDILTIPDAMGLGLRFSTGEGPIFDNPITCKADVEKIGVPDPEGELQYVMNAVRQIRKDLNGDVPLIGFSGSPWTLATYMVEGGSSKAFTKIKKMMYAEPQTLHLLLDKLADSVIEYLNAQIKAGAQSVMVFDTWGGVLTPRDYNLFSLQYMHKIVDGLIRENDGRRVPVTLFTKNGGMWLEQIAATGCDAVGLDWTINIADAKARVGDKVALQGNMDPSMLYASHDRIREEVASILEGFGHGGTGHVFNLGHGIHLDVPPENAGVFVEAVHELSKPYHQ.

Substrate is bound by residues 27–31 (RQAGR), F46, D77, Y154, T209, and H328.

It belongs to the uroporphyrinogen decarboxylase family. Homodimer.

The protein localises to the cytoplasm. The catalysed reaction is uroporphyrinogen III + 4 H(+) = coproporphyrinogen III + 4 CO2. The protein operates within porphyrin-containing compound metabolism; protoporphyrin-IX biosynthesis; coproporphyrinogen-III from 5-aminolevulinate: step 4/4. In terms of biological role, catalyzes the decarboxylation of four acetate groups of uroporphyrinogen-III to yield coproporphyrinogen-III. This chain is Uroporphyrinogen decarboxylase, found in Vibrio vulnificus (strain CMCP6).